The sequence spans 335 residues: NADH-quinone oxidoreductase subunit H (335 aa).

8 consecutive transmembrane segments (helical) span residues 11-31 (VILT…AGAL), 81-101 (VIFT…FAII), 114-134 (IGLL…LFAG), 154-174 (VSYE…VGSF), 187-207 (LWFI…GVAV), 238-258 (FFVG…TLFF), 270-290 (QLSF…FILL), and 307-327 (WKFC…VVLW).

Belongs to the complex I subunit 1 family. NDH-1 is composed of 13 different subunits. Subunits NuoA, H, J, K, L, M, N constitute the membrane sector of the complex.

It is found in the cell inner membrane. The enzyme catalyses a quinone + NADH + 5 H(+)(in) = a quinol + NAD(+) + 4 H(+)(out). In terms of biological role, NDH-1 shuttles electrons from NADH, via FMN and iron-sulfur (Fe-S) centers, to quinones in the respiratory chain. The immediate electron acceptor for the enzyme in this species is believed to be ubiquinone. Couples the redox reaction to proton translocation (for every two electrons transferred, four hydrogen ions are translocated across the cytoplasmic membrane), and thus conserves the redox energy in a proton gradient. This subunit may bind ubiquinone. This Pseudomonas fluorescens (strain ATCC BAA-477 / NRRL B-23932 / Pf-5) protein is NADH-quinone oxidoreductase subunit H.